Here is a 67-residue protein sequence, read N- to C-terminus: Large ribosomal subunit protein bL35 (67 aa).

Basic residues predominate over residues 1–16; it reads MPKMKTKSGAKKRFRV. Residues 1–25 form a disordered region; the sequence is MPKMKTKSGAKKRFRVRPGGTVKRG.

It belongs to the bacterial ribosomal protein bL35 family.

The protein is Large ribosomal subunit protein bL35 of Polaromonas sp. (strain JS666 / ATCC BAA-500).